The following is a 1009-amino-acid chain: MSYNNPNNSNSHLRPHAYNNSRRDDSDGDESSIEFLNQRSNTPLTQGTYNYHNTSTNSLNFQQPEPIYRNQTRTSLSDSYYDHPIFDTSQTQIQPPHDNPFTESYEMTDTSYQGNDHHYRTGQPNHLMNPTYNQAFIPHVYDEEDNDEQEYDQRIQYNQFQGDHFDLAAISYADDESQSQLDYVPTERVIPEGEEEEEEGETSFEKEPGSETISGPFGEERSFEEPPPQQEVRSKKLTRATGLNGHLVLDCPVADELLSKFPDYNPAEKSGGLSREFAFMRYTAVTCGPSNFYRDAYILRPVHYPIPRQTELMIVITMYNEDDILLGRTLKGVFKNIKYLESKARSSTWGKDSWKKIVVCIVSDGRTKINERAQALLAGLGVYQEGLAKSRVDDKKVQAHMFEYTTRVGISKVTDDVVKLTTEKVVPVQMLFCLKETNAKKINSHRWCFQAIGQVLDPKIVVLLDCGTQPSGRSLYELWKEFDRDHRVAGACGEITTSLKKRQMITNPLVYGQNFEYKISNILDKPTESSFGFISVLPGAFSAYRFIALQNDINGIGPLEKYFKGEFLHSSGELDPNDDEFQMKHLMLKEEAGIFTSNMYLAEDRILCFELVAKRGCNWLLRYCKSARAETDVPEGLAEFILQRRRWLNGSFFAAIYSLVHFYKVWTSSHSFGRKIFLHIEFFYQLINLIVSWFSIGSYFLVFRILTTSLGDKALGFAPGKILSVIFLWLYLASIVTTFVLSFGNKPKGTEKFYVTIVIFFAILMAYMIFAAIFMAVHSIQDIYRSGTRITVSLFFQNSEFRDLVVATSSTYALYFLASFLYFEPWHMFTSFVQYILLSPSYVNVLNIYAFCNIDDISWGTKGEVGGKSLGEAKLREDGTFDVSVPISKEQINQSYLDQLEKIRDPAPPEEKVLVTNTEDYYAFIRSMTVLVWMFTNFVVIALVLETGGFNQFVEATDLANLKSNRAAVFLTVILWTVAFMALFRFIGCIYYLITRLGREIKASEHATK.

Composition is skewed to polar residues over residues 1–12 and 34–62; these read MSYNNPNNSNSH and EFLN…LNFQ. Disordered regions lie at residues 1-62 and 175-234; these read MSYN…LNFQ and DESQ…EVRS. Acidic residues predominate over residues 192 to 202; it reads EGEEEEEEGET. A run of 7 helical transmembrane segments spans residues 647–667, 682–702, 722–742, 757–777, 804–823, 930–950, and 967–987; these read WLNG…KVWT, FFYQ…YFLV, ILSV…FVLS, IVIF…FMAV, LVVA…FLYF, VLVW…TGGF, and AAVF…FRFI.

It belongs to the chitin synthase family.

The protein resides in the cell membrane. It catalyses the reaction [(1-&gt;4)-N-acetyl-beta-D-glucosaminyl](n) + UDP-N-acetyl-alpha-D-glucosamine = [(1-&gt;4)-N-acetyl-beta-D-glucosaminyl](n+1) + UDP + H(+). Polymerizes chitin, a structural polymer of the cell wall and septum, by transferring the sugar moiety of UDP-GlcNAc to the non-reducing end of the growing chitin polymer. This is Chitin synthase 2 (CHS2) from Candida albicans (Yeast).